A 534-amino-acid polypeptide reads, in one-letter code: Cytochrome c oxidase subunit 1 (534 aa).

Residues 16–36 traverse the membrane as a helical segment; that stretch reads VLYFIFSVFCGMAGTGMSMII. Residues glutamate 39 and glycine 44 each contribute to the Ca(2+) site. Residue histidine 62 coordinates Fe(II)-heme a. 6 helical membrane-spanning segments follow: residues 64–84, 101–121, 147–167, 183–203, 235–255, and 267–287; these read ILMV…NYLL, ISFW…LVES, AIFA…NFIV, PLFV…LPVL, LFWF…FGVI, and VFGE…GFLV. Histidine 241 contributes to the Cu cation binding site. The segment at residues 241 to 245 is a cross-link (1'-histidyl-3'-tyrosine (His-Tyr)); that stretch reads HPEVY. Residue tyrosine 245 participates in O2 binding. Positions 290 and 291 each coordinate Cu cation. 2 helical membrane passes run 310–330 and 338–358; these read MIIA…IYGG and MMYA…GVAL. 2 residues coordinate Mg(2+): histidine 368 and aspartate 369. Transmembrane regions (helical) follow at residues 372–392 and 414–434; these read YVVA…MFAG and FWLI…LGIN. Histidine 376 is a binding site for heme a3. Residue histidine 378 coordinates Fe(II)-heme a. Ca(2+) is bound at residue proline 441. The chain crosses the membrane as a helical span at residues 453 to 473; the sequence is VSSIGSFIAMISLILFIYILF.

This sequence belongs to the heme-copper respiratory oxidase family. In terms of assembly, component of the cytochrome c oxidase (complex IV, CIV), a multisubunit enzyme composed of a catalytic core of 3 subunits and several supernumerary subunits. The complex exists as a monomer or a dimer and forms supercomplexes (SCs) in the inner mitochondrial membrane with ubiquinol-cytochrome c oxidoreductase (cytochrome b-c1 complex, complex III, CIII). It depends on heme as a cofactor. The cofactor is Cu cation.

The protein localises to the mitochondrion inner membrane. It catalyses the reaction 4 Fe(II)-[cytochrome c] + O2 + 8 H(+)(in) = 4 Fe(III)-[cytochrome c] + 2 H2O + 4 H(+)(out). It functions in the pathway energy metabolism; oxidative phosphorylation. Functionally, component of the cytochrome c oxidase, the last enzyme in the mitochondrial electron transport chain which drives oxidative phosphorylation. The respiratory chain contains 3 multisubunit complexes succinate dehydrogenase (complex II, CII), ubiquinol-cytochrome c oxidoreductase (cytochrome b-c1 complex, complex III, CIII) and cytochrome c oxidase (complex IV, CIV), that cooperate to transfer electrons derived from NADH and succinate to molecular oxygen, creating an electrochemical gradient over the inner membrane that drives transmembrane transport and the ATP synthase. Cytochrome c oxidase is the component of the respiratory chain that catalyzes the reduction of oxygen to water. Electrons originating from reduced cytochrome c in the intermembrane space (IMS) are transferred via the dinuclear copper A center (CU(A)) of subunit 2 and heme A of subunit 1 to the active site in subunit 1, a binuclear center (BNC) formed by heme A3 and copper B (CU(B)). The BNC reduces molecular oxygen to 2 water molecules using 4 electrons from cytochrome c in the IMS and 4 protons from the mitochondrial matrix. This is Cytochrome c oxidase subunit 1 (COX1) from Vanderwaltozyma polyspora (strain ATCC 22028 / DSM 70294 / BCRC 21397 / CBS 2163 / NBRC 10782 / NRRL Y-8283 / UCD 57-17) (Kluyveromyces polysporus).